A 761-amino-acid polypeptide reads, in one-letter code: RNA-binding protein 12B (761 aa).

Phosphoserine is present on residues S98, S101, and S112. K114 is covalently cross-linked (Glycyl lysine isopeptide (Lys-Gly) (interchain with G-Cter in SUMO2)). Residues 120–147 (SGYGSSINQDAGFHSNGTGHGNLRPRKT) are disordered. K151 is covalently cross-linked (Glycyl lysine isopeptide (Lys-Gly) (interchain with G-Cter in SUMO2)). An RRM 1 domain is found at 155–230 (PYLFLRGLPY…RFIEVMQGSE (76 aa)). Positions 247–262 (LRRSEEHSPPRGINDR) are enriched in basic and acidic residues. Positions 247–278 (LRRSEEHSPPRGINDRHFRKRSHSKSPRRTRS) are disordered. Phosphoserine is present on residues S250 and S254. The span at 263 to 278 (HFRKRSHSKSPRRTRS) shows a compositional bias: basic residues. T276 is modified (phosphothreonine). Phosphoserine is present on residues S278, S280, S292, and S294. The RRM 2 domain maps to 284–360 (FYVHLKNLSL…RPVHIDPISR (77 aa)). K319 carries the N6-acetyllysine modification. K335 participates in a covalent cross-link: Glycyl lysine isopeptide (Lys-Gly) (interchain with G-Cter in SUMO2). Residues 372–384 (KKRSGSPERDRPG) show a composition bias toward basic and acidic residues. The interval 372-392 (KKRSGSPERDRPGHVSQKYSQ) is disordered. S377 bears the Phosphoserine mark. The RRM 3 domain maps to 400–477 (LCIYIRNFPF…TEVLLRLISE (78 aa)). Glycyl lysine isopeptide (Lys-Gly) (interchain with G-Cter in SUMO2) cross-links involve residues K514 and K541. The segment covering 538 to 621 (DNFKHPQRDF…RHPREEDWRR (84 aa)) has biased composition (basic and acidic residues). A disordered region spans residues 538 to 690 (DNFKHPQRDF…THQMKTSGAL (153 aa)). A phosphoserine mark is found at S575 and S591. A compositionally biased stretch (polar residues) spans 627-654 (LQSTSGGHPQSISGGHPQSISGARPRST). Residues 661–672 (SISGGRLRSISG) show a composition bias toward low complexity.

This Pongo abelii (Sumatran orangutan) protein is RNA-binding protein 12B (RBM12B).